We begin with the raw amino-acid sequence, 37 residues long: Cytochrome b6-f complex subunit 5 (37 aa).

A helical membrane pass occupies residues 5–25 (SLFGIVLGLIPITLAGLFVTA).

Belongs to the PetG family. As to quaternary structure, the 4 large subunits of the cytochrome b6-f complex are cytochrome b6, subunit IV (17 kDa polypeptide, PetD), cytochrome f and the Rieske protein, while the 4 small subunits are PetG, PetL, PetM and PetN. The complex functions as a dimer.

It localises to the plastid. It is found in the chloroplast thylakoid membrane. Its function is as follows. Component of the cytochrome b6-f complex, which mediates electron transfer between photosystem II (PSII) and photosystem I (PSI), cyclic electron flow around PSI, and state transitions. PetG is required for either the stability or assembly of the cytochrome b6-f complex. The polypeptide is Cytochrome b6-f complex subunit 5 (Arabis hirsuta (Hairy rock-cress)).